The chain runs to 107 residues: uncharacterized protein (107 aa).

2 helical membrane passes run 5 to 25 and 42 to 62; these read WTIIFALIFTLIVAIFAVINV and ILVILGSVLMGALIVFSVGIF. Basic and acidic residues predominate over residues 82 to 92; it reads IHKQEDTHLAD. The disordered stretch occupies residues 82–107; the sequence is IHKQEDTHLADQTDTQDASAMIEKKD.

The protein localises to the cell membrane. This is an uncharacterized protein from Bacillus subtilis (strain 168).